The sequence spans 247 residues: 1-(5-phosphoribosyl)-5-[(5-phosphoribosylamino)methylideneamino] imidazole-4-carboxamide isomerase (247 aa).

D8 (proton acceptor) is an active-site residue. The active-site Proton donor is the D131.

It belongs to the HisA/HisF family.

The protein resides in the cytoplasm. The catalysed reaction is 1-(5-phospho-beta-D-ribosyl)-5-[(5-phospho-beta-D-ribosylamino)methylideneamino]imidazole-4-carboxamide = 5-[(5-phospho-1-deoxy-D-ribulos-1-ylimino)methylamino]-1-(5-phospho-beta-D-ribosyl)imidazole-4-carboxamide. It functions in the pathway amino-acid biosynthesis; L-histidine biosynthesis; L-histidine from 5-phospho-alpha-D-ribose 1-diphosphate: step 4/9. The chain is 1-(5-phosphoribosyl)-5-[(5-phosphoribosylamino)methylideneamino] imidazole-4-carboxamide isomerase from Methylobacillus flagellatus (strain ATCC 51484 / DSM 6875 / VKM B-1610 / KT).